A 420-amino-acid polypeptide reads, in one-letter code: Argininosuccinate synthase (420 aa).

An ATP-binding site is contributed by 23-31 (AYSGGLDTS). Y102 is an L-citrulline binding site. Residue G132 participates in ATP binding. Residues T134, N138, and D139 each contribute to the L-aspartate site. N138 is a binding site for L-citrulline. Residues R142, S190, E274, and Y286 each coordinate L-citrulline.

It belongs to the argininosuccinate synthase family. Type 1 subfamily. Homotetramer.

The protein resides in the cytoplasm. The enzyme catalyses L-citrulline + L-aspartate + ATP = 2-(N(omega)-L-arginino)succinate + AMP + diphosphate + H(+). It functions in the pathway amino-acid biosynthesis; L-arginine biosynthesis; L-arginine from L-ornithine and carbamoyl phosphate: step 2/3. The protein is Argininosuccinate synthase of Renibacterium salmoninarum (strain ATCC 33209 / DSM 20767 / JCM 11484 / NBRC 15589 / NCIMB 2235).